We begin with the raw amino-acid sequence, 342 residues long: UDP-N-acetylenolpyruvoylglucosamine reductase (342 aa).

Positions 17 to 192 (RFEAAARYAA…AEVTFALPVD (176 aa)) constitute an FAD-binding PCMH-type domain. The active site involves Arg-168. Ser-242 (proton donor) is an active-site residue. Residue Glu-338 is part of the active site.

It belongs to the MurB family. Requires FAD as cofactor.

The protein resides in the cytoplasm. It carries out the reaction UDP-N-acetyl-alpha-D-muramate + NADP(+) = UDP-N-acetyl-3-O-(1-carboxyvinyl)-alpha-D-glucosamine + NADPH + H(+). Its pathway is cell wall biogenesis; peptidoglycan biosynthesis. Its function is as follows. Cell wall formation. The chain is UDP-N-acetylenolpyruvoylglucosamine reductase from Ralstonia nicotianae (strain ATCC BAA-1114 / GMI1000) (Ralstonia solanacearum).